We begin with the raw amino-acid sequence, 202 residues long: MCRTLAAFPTTCLERAKEFKTRLGIFLHKSELGCDTGSTGKFEWGSKHSKENRNFSEDVLGWRESFDLLLSSKNGVAAFHAFLKTEFSEENLEFWLACEEFKKIRSATKLASRAHQIFEEFICSEAPKEVNIDHETHELTRMNLQTATATCFDAAQGKTRTLMEKDSYPRFLKSPAYRDLAAQASAASATLSSCSLDEPSHT.

2 S-palmitoyl cysteine lipidation sites follow: Cys-2 and Cys-12. Residues 65–181 (SFDLLLSSKN…LKSPAYRDLA (117 aa)) form the RGS domain. Tyr-168 is modified (phosphotyrosine; by EGFR). Tyr-177 bears the Phosphotyrosine mark.

Interacts with GNAI1 and GNAQ. Interacts with GNAI2, GNAI3 and GNAO1. In terms of processing, palmitoylated on Cys-2 and/or Cys-12. Phosphorylated. Phosphorylation at Tyr-168 by EGFR enhances GTPase accelerating (GAP) activity toward GNAI1. As to expression, abundantly expressed in retina with lower levels of expression in most other tissues.

The protein localises to the membrane. Regulates G protein-coupled receptor signaling cascades. Inhibits signal transduction by increasing the GTPase activity of G protein alpha subunits, thereby driving them into their inactive GDP-bound form. Plays an important role in the phototransduction cascade by regulating the lifetime and effective concentration of activated transducin alpha. May regulate extra and intracellular mitogenic signals. This chain is Regulator of G-protein signaling 16 (RGS16), found in Homo sapiens (Human).